Here is a 291-residue protein sequence, read N- to C-terminus: MLRGSMVALVTPMQADGSLDWEALHKLVDWHLQEGTDAIVAVGTTGESATLDVKEHIAVIRAVVDQVNGRVPVIAGTGANSTSEAIELTQAAKDGGVDACLLVAPYYNKPTQEGLFLHHQKIAASVAIPQLLYNVPGRTAVDMLPETIVRLSHVDNIVGVKEATGDIARVGQILESAKAGFLLISGDDDTAVDFIAAGGVGEISVTANVAPKLVAQMCELAAQGKVEEARAINARLADVHTAMFLESNPIPVKWALAKMGLMPNGIRLPLTPLDAKYHLQVEQALRAANLL.

T45 is a binding site for pyruvate. The active-site Proton donor/acceptor is the Y133. K161 functions as the Schiff-base intermediate with substrate in the catalytic mechanism. Residue I203 coordinates pyruvate.

This sequence belongs to the DapA family. As to quaternary structure, homotetramer; dimer of dimers.

The protein resides in the cytoplasm. The catalysed reaction is L-aspartate 4-semialdehyde + pyruvate = (2S,4S)-4-hydroxy-2,3,4,5-tetrahydrodipicolinate + H2O + H(+). It participates in amino-acid biosynthesis; L-lysine biosynthesis via DAP pathway; (S)-tetrahydrodipicolinate from L-aspartate: step 3/4. Catalyzes the condensation of (S)-aspartate-beta-semialdehyde [(S)-ASA] and pyruvate to 4-hydroxy-tetrahydrodipicolinate (HTPA). The protein is 4-hydroxy-tetrahydrodipicolinate synthase of Saccharophagus degradans (strain 2-40 / ATCC 43961 / DSM 17024).